Reading from the N-terminus, the 183-residue chain is Dual-action ribosomal maturation protein DarP (183 aa).

The tract at residues M1 to V27 is disordered. The span at V9–E18 shows a compositional bias: acidic residues.

The protein belongs to the DarP family.

It is found in the cytoplasm. Its function is as follows. Member of a network of 50S ribosomal subunit biogenesis factors which assembles along the 30S-50S interface, preventing incorrect 23S rRNA structures from forming. Promotes peptidyl transferase center (PTC) maturation. In Bordetella parapertussis (strain 12822 / ATCC BAA-587 / NCTC 13253), this protein is Dual-action ribosomal maturation protein DarP.